A 476-amino-acid polypeptide reads, in one-letter code: tRNA(Ile)-lysidine synthase (476 aa).

26–31 is a binding site for ATP; that stretch reads SGGSDS.

Belongs to the tRNA(Ile)-lysidine synthase family.

The protein resides in the cytoplasm. The catalysed reaction is cytidine(34) in tRNA(Ile2) + L-lysine + ATP = lysidine(34) in tRNA(Ile2) + AMP + diphosphate + H(+). Functionally, ligates lysine onto the cytidine present at position 34 of the AUA codon-specific tRNA(Ile) that contains the anticodon CAU, in an ATP-dependent manner. Cytidine is converted to lysidine, thus changing the amino acid specificity of the tRNA from methionine to isoleucine. This Bartonella quintana (strain Toulouse) (Rochalimaea quintana) protein is tRNA(Ile)-lysidine synthase.